The primary structure comprises 132 residues: Chaperone protein SycT (132 aa).

Binds to YopT.

Its function is as follows. Functions as a specific chaperone for YopT. This chain is Chaperone protein SycT (sycT), found in Yersinia pestis.